A 200-amino-acid chain; its full sequence is Glycerol-3-phosphate acyltransferase (200 aa).

5 helical membrane passes run 6 to 26 (LTLG…AVLV), 56 to 76 (SAAM…YIAF), 82 to 102 (QVAL…PIFF), 118 to 138 (APIG…MVLI), and 141 to 161 (YSSL…WFLD).

Belongs to the PlsY family. Probably interacts with PlsX.

It localises to the cell inner membrane. The catalysed reaction is an acyl phosphate + sn-glycerol 3-phosphate = a 1-acyl-sn-glycero-3-phosphate + phosphate. The protein operates within lipid metabolism; phospholipid metabolism. Functionally, catalyzes the transfer of an acyl group from acyl-phosphate (acyl-PO(4)) to glycerol-3-phosphate (G3P) to form lysophosphatidic acid (LPA). This enzyme utilizes acyl-phosphate as fatty acyl donor, but not acyl-CoA or acyl-ACP. This is Glycerol-3-phosphate acyltransferase from Shewanella sediminis (strain HAW-EB3).